The chain runs to 137 residues: Acidic phospholipase A2 1 (137 aa).

Residues 1 to 11 form the signal peptide; it reads LVAVCVSLLGA. The propeptide occupies 12-19; the sequence is ANIPPQPL. 7 disulfide bridges follow: C30-C89, C44-C136, C46-C62, C61-C117, C68-C110, C78-C103, and C96-C108. 3 residues coordinate Ca(2+): Y45, G47, and G49. Positions 49 and 65 each coordinate tridecanoate. The active site involves H65. Residue D66 participates in Ca(2+) binding. The active site involves D111.

In terms of assembly, monomer. Ca(2+) is required as a cofactor. In terms of tissue distribution, expressed by the venom gland.

The protein resides in the secreted. It carries out the reaction a 1,2-diacyl-sn-glycero-3-phosphocholine + H2O = a 1-acyl-sn-glycero-3-phosphocholine + a fatty acid + H(+). In terms of biological role, snake venom phospholipase A2 (PLA2) that shows anticoagulant and neurotoxic activities. PLA2 catalyzes the calcium-dependent hydrolysis of the 2-acyl groups in 3-sn-phosphoglycerides. This chain is Acidic phospholipase A2 1, found in Bungarus caeruleus (Indian krait).